A 121-amino-acid chain; its full sequence is Large ribosomal subunit protein bL20 (121 aa).

This sequence belongs to the bacterial ribosomal protein bL20 family.

In terms of biological role, binds directly to 23S ribosomal RNA and is necessary for the in vitro assembly process of the 50S ribosomal subunit. It is not involved in the protein synthesizing functions of that subunit. This is Large ribosomal subunit protein bL20 from Wolbachia sp. subsp. Brugia malayi (strain TRS).